The sequence spans 345 residues: Molybdate/tungstate-binding protein WtpA (345 aa).

A signal peptide spans 1-27 (MREGGVMKKRLLALIVAFAVLTAGCLG). Molybdate is bound by residues 41–42 (GS), Ser-75, 160–162 (DPC), Glu-218, and Tyr-236. Tungstate contacts are provided by residues 41-42 (GS), Ser-75, 160-162 (DPC), Glu-218, and Tyr-236.

This sequence belongs to the bacterial solute-binding protein 1 family. WtpA subfamily. Monomer. The complex is composed of two ATP-binding proteins (WtpC), two transmembrane proteins (WtpB) and a solute-binding protein (WtpA).

It localises to the cell membrane. Its function is as follows. Part of the ABC transporter complex WtpABC involved in molybdate/tungstate import. Binds tungstate and molybdate, with a preference for tungstate. The chain is Molybdate/tungstate-binding protein WtpA from Pyrococcus furiosus (strain ATCC 43587 / DSM 3638 / JCM 8422 / Vc1).